Consider the following 100-residue polypeptide: MATLADPRDIILAPVISEKSYGLLDDNVYTFLVRPDSNKTQIKIAVEKIFAVKVASVNTANRQGKRKRTRTGYGKRKSTKRAIVTLAPGSRPIDLFGAPA.

Belongs to the universal ribosomal protein uL23 family. Part of the 50S ribosomal subunit. Contacts protein L29, and trigger factor when it is bound to the ribosome.

Functionally, one of the early assembly proteins it binds 23S rRNA. One of the proteins that surrounds the polypeptide exit tunnel on the outside of the ribosome. Forms the main docking site for trigger factor binding to the ribosome. The sequence is that of Large ribosomal subunit protein uL23 from Mycobacterium tuberculosis (strain ATCC 25177 / H37Ra).